The sequence spans 201 residues: Small ribosomal subunit protein uS4c (201 aa).

Positions 89-151 (MRLDNILFRL…QKSKTLIQNY (63 aa)) constitute an S4 RNA-binding domain.

The protein belongs to the universal ribosomal protein uS4 family. Part of the 30S ribosomal subunit. Contacts protein S5. The interaction surface between S4 and S5 is involved in control of translational fidelity.

Its subcellular location is the plastid. It localises to the chloroplast. In terms of biological role, one of the primary rRNA binding proteins, it binds directly to 16S rRNA where it nucleates assembly of the body of the 30S subunit. With S5 and S12 plays an important role in translational accuracy. The protein is Small ribosomal subunit protein uS4c (rps4) of Phaseolus vulgaris (Kidney bean).